A 393-amino-acid chain; its full sequence is Endoplasmic reticulum junction formation protein lunapark-A (393 aa).

The Cytoplasmic segment spans residues 1–45 (MGAVVSRWRAKPSTVEVLEGLDKDIQVLEEYREKNHKQLKLWVYR). Residues 46-66 (LLLYSALLYLMACAVVYAWYI) form a helical membrane-spanning segment. Topologically, residues 67–69 (PER) are lumenal. A helical transmembrane segment spans residues 70–90 (MIGKLIVASPFLLFPLLIWLL). The Cytoplasmic segment spans residues 91–393 (RKLLIILYNK…EQDVSAMEVE (303 aa)). Positions 95-130 (IILYNKRTERNNEKLEELKAEKKKILEQVMETETYK) form a coiled coil. The tract at residues 146-209 (KLELETQPIG…PPEKGLSAST (64 aa)) is disordered. The segment covering 176–190 (TGRPPPVPVPGPSVP) has biased composition (pro residues). A C4-type; plays a role in ER morphology zinc finger spans residues 269-294 (CQQCLSHNGMALKEEFEYIAFRCAYC). Positions 314–393 (AAEAKTSQDP…EQDVSAMEVE (80 aa)) are disordered. Composition is skewed to basic and acidic residues over residues 340 to 353 (ESKEAGPEPVKAGD) and 364 to 383 (EEMKPGDPEPHTDIPDKSDG).

It belongs to the lunapark family. As to quaternary structure, homodimer; homodimerization requires the C4-type zinc finger motif and decreases during mitosis in a phosphorylation-dependent manner. Phosphorylated. Phosphorylation occurs during interphase. Phosphorylation also occurs during mitosis; these phosphorylations reduce both its homodimerization and the ER three-way tubular junction formation.

The protein resides in the endoplasmic reticulum membrane. Endoplasmic reticulum (ER)-shaping membrane protein that plays a role in determining ER morphology. Involved in the stabilization of nascent three-way ER tubular junctions within the ER network. May also play a role as a curvature-stabilizing protein within three-way ER tubular junction network. In Danio rerio (Zebrafish), this protein is Endoplasmic reticulum junction formation protein lunapark-A (lnpka).